Consider the following 1067-residue polypeptide: Probable importin-5 homolog (1067 aa).

24 HEAT repeats span residues 3-34 (LQPITDLLKALNSGNTTTIQQAEQLYADYKNH), 42-75 (SFIVLIRTSQDELLRSYPPVLLRTLVNGNDSGNI), 93-120 (FAVREEPKNHIRHSILNVIAILAIQLVP), 125-152 (PEILSFIIESSSSPEENLRESSFYLIGA), 164-197 (APHFDKFALLVEKGLNDPSAKVQVSALETVSTFI), 206-243 (VFKPLIPAMLNTIQKTIESNLEKEAQKGILTFIIIAQY), 251-286 (NFDMIFKVFFQFLEHQSLEDETKHACLHFFLTFAEF), 295-347 (LYLE…HCVS), 349-381 (GLWEFFLQCAPTLLNSGNWKERYTGLMTLSSIS), 385-425 (EKQI…ASYL), 427-466 (REMQDLYKTLIPVSLEHLNDPFPRVTISNCEFLTLFLDEI), 468-508 (PNRV…VDGI), 510-553 (EEFT…GLAV), 555-596 (KKVF…AQCL), 598-658 (EDFI…AMEL), 661-703 (HLFP…SKQH), 718-757 (FTSRLFLDSYERMAASIKTESEPDTLSAKLKALSDLMDIG), 763-826 (ADRI…CIQF), 832-869 (PYIATVLPAMIELIETAPSVEIKTSMICILDDLIENGG), 876-909 (YPHIIKPMMNCTLPNLDPSLIQSAVFGIGLAAEN), 917-960 (FLME…ITNL), 969-999 (PQTIALWLSYLPIQDDGEAGSIIKSLCTLIR), 1008-1040 (QQYIVKVLEIIAVGLHKKAVNPDDKQIISLALR), and 1041-1064 (SQESLVAQSLFQLSAENQAILANF).

It belongs to the importin beta family. Importin beta-3 subfamily.

It is found in the cytoplasm. Its subcellular location is the nucleus. In terms of biological role, functions in nuclear protein import as nuclear transport receptor. Serves as receptor for nuclear localization signals (NLS) in cargo substrates. In Dictyostelium discoideum (Social amoeba), this protein is Probable importin-5 homolog.